The following is a 234-amino-acid chain: Sperm-associated microtubule inner protein 5 (234 aa).

Microtubule inner protein component of sperm flagellar doublet microtubules. As to expression, expressed in testis (at protein level). Strongly expressed in peritubular cells and Leydig cells and weakly expressed in the cytoplasm of spermatocytes.

The protein localises to the cytoplasm. The protein resides in the cytoskeleton. Its subcellular location is the flagellum axoneme. It localises to the nucleus. In terms of biological role, microtubule inner protein (MIP) part of the dynein-decorated doublet microtubules (DMTs) in flagellum axoneme. May serve to reinforce and thus stabilize the microtubule structure in the sperm flagella. The protein is Sperm-associated microtubule inner protein 5 of Homo sapiens (Human).